Consider the following 691-residue polypeptide: Protein simr-1 (691 aa).

The region spanning 139 to 204 is the Tudor; degenerate domain; that stretch reads EAEITPGTIY…TLFHLGKFTI (66 aa). 2 disordered regions span residues 547–573 and 588–618; these read TGPCGSNTSRPTAQNTANSSINQDMSI and DNLNDTENWPNSEREQSATEMESGAEATTNS. Polar residues-rich tracts occupy residues 549–573 and 588–598; these read PCGSNTSRPTAQNTANSSINQDMSI and DNLNDTENWPN.

The protein resides in the cytoplasm. Its subcellular location is the perinuclear region. In terms of biological role, acts downstream of piRNA production to promote mediator complex-dependent endogenous siRNA biogenesis from piRNA-target mRNAs in the RNA interference pathway in germ cells. Not required to identify target mRNA by the piRNA pathway. Plays a role in both spermatogenesis and oogenesis and in maintaining fertility over multiple generations, probably by directing mutator-dependent silencing to piRNA-targeted genes. This Caenorhabditis elegans protein is Protein simr-1.